A 191-amino-acid polypeptide reads, in one-letter code: Ribosome hibernation promotion factor (191 aa).

The disordered stretch occupies residues 100–123 (KQRQEGRPEPLPGPAEAEVNAQGS).

The protein belongs to the HPF/YfiA ribosome-associated protein family. Long HPF subfamily. In terms of assembly, interacts with 100S ribosomes.

The protein resides in the cytoplasm. Functionally, required for dimerization of active 70S ribosomes into 100S ribosomes in stationary phase; 100S ribosomes are translationally inactive and sometimes present during exponential growth. The chain is Ribosome hibernation promotion factor from Deinococcus radiodurans (strain ATCC 13939 / DSM 20539 / JCM 16871 / CCUG 27074 / LMG 4051 / NBRC 15346 / NCIMB 9279 / VKM B-1422 / R1).